The sequence spans 548 residues: Synaptic vesicle 2-related protein (548 aa).

At 1-87 the chain is on the cytoplasmic side; sequence MEEDLFQLRQ…GFGKFQWKLS (87 aa). 2 positions are modified to phosphoserine: Ser-25 and Ser-31. The chain crosses the membrane as a helical span at residues 88–108; sequence VLTGLAWMADAMEMMILSILA. Over 109 to 122 the chain is Vesicular; it reads PQLHCEWRLPSWQV. The chain crosses the membrane as a helical span at residues 123-143; that stretch reads ALLTSVVFVGMMSSSTLWGNI. The Cytoplasmic segment spans residues 144–156; that stretch reads SDQYGRKTGLKIS. Residues 157–177 traverse the membrane as a helical segment; it reads VLWTLYYGILSAFAPVYSWIL. Residues 178–180 are Vesicular-facing; that stretch reads VLR. Residues 181 to 201 traverse the membrane as a helical segment; sequence GLVGFGIGGVPQSVTLYAEFL. The Cytoplasmic segment spans residues 202–209; the sequence is PMKARAKC. The chain crosses the membrane as a helical span at residues 210 to 230; that stretch reads ILLIEVFWAIGTVFEVVLAVF. Residues 231–238 are Vesicular-facing; the sequence is VMPSLGWR. Residues 239–259 form a helical membrane-spanning segment; it reads WLLILSAVPLLLFAVLCFWLP. The Cytoplasmic portion of the chain corresponds to 260 to 316; sequence ESARYDVLSGNQEKAIATLKRIATENGAPMPLGKLIISRQEDRGKMRDLFTPHFRWT. The chain crosses the membrane as a helical span at residues 317 to 337; that stretch reads TLLLWFIWFSNAFSYYGLVLL. Residues 338-373 lie on the Vesicular side of the membrane; that stretch reads TTELFQAGDVCSISSRKKAVEAKCSLACEYLSEEDY. The chain crosses the membrane as a helical span at residues 374 to 394; sequence MDLLWTTLSEFPGVLVTLWII. Over 395–401 the chain is Cytoplasmic; sequence DRLGRKK. Residues 402–422 form a helical membrane-spanning segment; it reads TMALCFVVFSFCSLLLFICVG. At 423-425 the chain is on the vesicular side; it reads RNM. A helical transmembrane segment spans residues 426-446; the sequence is LTLLLFIARAFISGGFQAAYV. Topologically, residues 447 to 457 are cytoplasmic; that stretch reads YTPEVYPTATR. Residues 458 to 478 traverse the membrane as a helical segment; it reads ALGLGTCSGMARVGALITPFI. Residues 479–489 are Vesicular-facing; sequence AQVMLESSVYL. A helical transmembrane segment spans residues 490 to 510; it reads TLAVYSGCCLLAALASCFLPI. Over 511-548 the chain is Cytoplasmic; it reads ETKGRGLQESSHREWGQEMVGRGAHGTGVARSNSGSQE. The segment at 528-548 is disordered; that stretch reads EMVGRGAHGTGVARSNSGSQE. Position 542 is a phosphoserine (Ser-542).

The protein belongs to the major facilitator superfamily. In terms of tissue distribution, detected in brain and adrenal medulla.

Its subcellular location is the cytoplasmic vesicle. It localises to the secretory vesicle. The protein resides in the synaptic vesicle membrane. This Bos taurus (Bovine) protein is Synaptic vesicle 2-related protein (SVOP).